The sequence spans 552 residues: MAFAVLLDQVGSLGRFQILQLAFLCIANILLFPHILLENFTAAVPGHRCWVHILDNDTVSHNDTGTLGQDALLRISIPLDSNLKPEKCRRFVHPQWQLLHLNRTFSNTSEPDTEPCVDGWVYEQSSFFSTVVTEWDLVCEWESQKSVVQSLFMAGSLLGSVIFGYLSDRFGRKMICSWCLLQLAISDTCAAFAPTFSVYCSLRFLAGSCVMTIMGHSFLLVIEWTNPQSRSMVTTLLLCASSVGQMLLGGLAFVIQDWRTLQLTVSIPIFVIFLSSRWLVESARWLITYNQLDKGLKELRRAARINGKKNAGEILTIEFLRSAMQEELDAARSQASIFCLFHAPRLRMIVLYLGFVRLAVSVPLYGLIFNLQYLGRNIYLFQVLFGAITATARFVALLVMNYMGRRISQVLFLLPVGLFILVNTFLDQEMQTLRTILATLGAGVLCIATTSGSVHFSELIPTVLRGTGGGINILFSRIGAALAPLLMIFVGFSPYLPWITYGVFPILAGLVVLLLPETKNLPLPNTIQDVENDRKETRKVKQEDNCMKVTQF.

12 helical membrane-spanning segments follow: residues 16–36 (FQILQLAFLCIANILLFPHIL), 146–166 (SVVQSLFMAGSLLGSVIFGYL), 174–194 (MICSWCLLQLAISDTCAAFAP), 204–224 (FLAGSCVMTIMGHSFLLVIEW), 235–255 (TLLLCASSVGQMLLGGLAFVI), 260–280 (TLQLTVSIPIFVIFLSSRWLV), 349–369 (IVLYLGFVRLAVSVPLYGLIF), 380–400 (LFQVLFGAITATARFVALLVM), 407–427 (ISQVLFLLPVGLFILVNTFLD), 436–456 (ILATLGAGVLCIATTSGSVHF), 473–493 (ILFSRIGAALAPLLMIFVGFS), and 495–515 (YLPWITYGVFPILAGLVVLLL).

Belongs to the major facilitator (TC 2.A.1) superfamily. Organic cation transporter (TC 2.A.1.19) family.

Its subcellular location is the cell membrane. The enzyme catalyses estrone 3-sulfate(out) + glutarate(in) = estrone 3-sulfate(in) + glutarate(out). It catalyses the reaction 17beta-estradiol 17-O-(beta-D-glucuronate)(out) + glutarate(in) = 17beta-estradiol 17-O-(beta-D-glucuronate)(in) + glutarate(out). The catalysed reaction is 5alpha-androstane-3alpha,17beta-diol 3-O-(beta-D-glucuronate)(out) + glutarate(in) = 5alpha-androstane-3alpha,17beta-diol 3-O-(beta-D-glucuronate)(in) + glutarate(out). It carries out the reaction dehydroepiandrosterone 3-sulfate(out) + glutarate(in) = dehydroepiandrosterone 3-sulfate(in) + glutarate(out). The enzyme catalyses glutarate(in) + succinate(out) = glutarate(out) + succinate(in). Functionally, renal transmembrane organic anion/dicarboxylate exchanger that participates in the reabsorption of conjugated steroids, as well as bile acids, driven by an outward gradient of dicarboxylates such as glutarate or succinate. Transports androstanediol glucuronide (5alpha-androstane-3alpha,17beta-diol 3-O-(beta-D-glucuronate)), estrone 3-sulfate, and estradiol-17-glucuronide (17beta-estradiol 17-O-(beta-D-glucuronate)), but not taurocholate. In Microcebus murinus (Gray mouse lemur), this protein is Steroid transmembrane transporter SLC22A24.